The following is a 462-amino-acid chain: Chromosomal replication initiator protein DnaA (462 aa).

The tract at residues 1-84 (MAVSLWQQCI…RFDIGSRPSA (84 aa)) is domain I, interacts with DnaA modulators. The interval 84–125 (APKPIQATAAVVKPKLESSPQKSQTSFNVNAPEPAATANHRS) is domain II. The tract at residues 126-342 (NINPTYQFEN…GALNRVIANA (217 aa)) is domain III, AAA+ region. The ATP site is built by Gly-170, Gly-172, Lys-173, and Thr-174. The tract at residues 343-462 (NFTGRPITID…YANLIRTLSS (120 aa)) is domain IV, binds dsDNA.

Belongs to the DnaA family. As to quaternary structure, oligomerizes as a right-handed, spiral filament on DNA at oriC.

Its subcellular location is the cytoplasm. In terms of biological role, plays an essential role in the initiation and regulation of chromosomal replication. ATP-DnaA binds to the origin of replication (oriC) to initiate formation of the DNA replication initiation complex once per cell cycle. Binds the DnaA box (a 9 base pair repeat at the origin) and separates the double-stranded (ds)DNA. Forms a right-handed helical filament on oriC DNA; dsDNA binds to the exterior of the filament while single-stranded (ss)DNA is stabiized in the filament's interior. The ATP-DnaA-oriC complex binds and stabilizes one strand of the AT-rich DNA unwinding element (DUE), permitting loading of DNA polymerase. After initiation quickly degrades to an ADP-DnaA complex that is not apt for DNA replication. Binds acidic phospholipids. The chain is Chromosomal replication initiator protein DnaA from Shewanella woodyi (strain ATCC 51908 / MS32).